The following is a 204-amino-acid chain: MIGRLRGIILEKQPPLVLLETNGVGYEVQLPMTCFYELPELGQEAIIFTQFVVREDAQLLYGFNNKQERALFRELIKVNGVGPKLALAILSGMSAQQFVGAVEREDITTLVKLPGVGKKTAERLVVEMKDRFKGLNGDLFNNTGDISLPTASPQTSDADIEAEAASALVALGYKPQEASRLVSKIAKPGADCETLIRDALRAAL.

The tract at residues 1–64 is domain I; it reads MIGRLRGIIL…EDAQLLYGFN (64 aa). The tract at residues 65–142 is domain II; the sequence is NKQERALFRE…KGLNGDLFNN (78 aa). Residues 143–155 are flexible linker; sequence TGDISLPTASPQT. Residues 156-204 are domain III; sequence SDADIEAEAASALVALGYKPQEASRLVSKIAKPGADCETLIRDALRAAL.

This sequence belongs to the RuvA family. As to quaternary structure, homotetramer. Forms an RuvA(8)-RuvB(12)-Holliday junction (HJ) complex. HJ DNA is sandwiched between 2 RuvA tetramers; dsDNA enters through RuvA and exits via RuvB. An RuvB hexamer assembles on each DNA strand where it exits the tetramer. Each RuvB hexamer is contacted by two RuvA subunits (via domain III) on 2 adjacent RuvB subunits; this complex drives branch migration. In the full resolvosome a probable DNA-RuvA(4)-RuvB(12)-RuvC(2) complex forms which resolves the HJ.

Its subcellular location is the cytoplasm. The RuvA-RuvB-RuvC complex processes Holliday junction (HJ) DNA during genetic recombination and DNA repair, while the RuvA-RuvB complex plays an important role in the rescue of blocked DNA replication forks via replication fork reversal (RFR). RuvA specifically binds to HJ cruciform DNA, conferring on it an open structure. The RuvB hexamer acts as an ATP-dependent pump, pulling dsDNA into and through the RuvAB complex. HJ branch migration allows RuvC to scan DNA until it finds its consensus sequence, where it cleaves and resolves the cruciform DNA. This Yersinia pseudotuberculosis serotype O:1b (strain IP 31758) protein is Holliday junction branch migration complex subunit RuvA.